A 252-amino-acid polypeptide reads, in one-letter code: uncharacterized protein (252 aa).

16 to 40 provides a ligand contact to NADP(+); the sequence is LVTGASDGIGREAAMTYARYGATVI. Serine 152 lines the substrate pocket. Tyrosine 165 (proton acceptor) is an active-site residue.

Belongs to the short-chain dehydrogenases/reductases (SDR) family.

This is an uncharacterized protein from Escherichia coli (strain K12).